The sequence spans 311 residues: Probable cell division protein WhiA (311 aa).

Residues 274–308 (SLKELGEMIPSGAISKSGINHRIRKINEFAEKLRE) constitute a DNA-binding region (H-T-H motif).

This sequence belongs to the WhiA family.

In terms of biological role, involved in cell division and chromosome segregation. The chain is Probable cell division protein WhiA from Enterococcus faecalis (strain ATCC 700802 / V583).